The chain runs to 122 residues: AGEVEKREGMMKQIGGSMGALAAISKGQKPYDAEAVKAAVTTISTNAKAFPDQFPPGSETGSAAAPAIWENFDDFKSKAAKLGADADKVLASLPADQAGVTAAMQTLGADCGACHQTYRLKK.

Heme is bound by residues Met11, Cys111, Cys114, and His115. Residues Met11, Cys111, Cys114, and His115 each coordinate heme c.

In terms of assembly, monomer. In terms of processing, binds 1 heme c group covalently per subunit.

Functionally, low-spin monoheme cytochrome c. The protein is Cytochrome c-556 of Agrobacterium tumefaciens (strain II Chrys).